The chain runs to 177 residues: Isopentenyl-diphosphate Delta-isomerase (177 aa).

Mn(2+) contacts are provided by His22 and His28. The region spanning Leu26–Ile160 is the Nudix hydrolase domain. Residue Cys62 is part of the active site. His64 contributes to the Mn(2+) binding site. A Mg(2+)-binding site is contributed by Glu82. Mn(2+)-binding residues include Glu108 and Glu110. Residue Glu110 is part of the active site.

This sequence belongs to the IPP isomerase type 1 family. It depends on Mg(2+) as a cofactor. Mn(2+) serves as cofactor.

The protein localises to the cytoplasm. It catalyses the reaction isopentenyl diphosphate = dimethylallyl diphosphate. The protein operates within isoprenoid biosynthesis; dimethylallyl diphosphate biosynthesis; dimethylallyl diphosphate from isopentenyl diphosphate: step 1/1. It participates in porphyrin-containing compound metabolism; chlorophyll biosynthesis. In terms of biological role, catalyzes the 1,3-allylic rearrangement of the homoallylic substrate isopentenyl (IPP) to its highly electrophilic allylic isomer, dimethylallyl diphosphate (DMAPP). This is Isopentenyl-diphosphate Delta-isomerase from Cereibacter sphaeroides (strain ATCC 17025 / ATH 2.4.3) (Rhodobacter sphaeroides).